The primary structure comprises 1044 residues: Integrin alpha-8 (1044 aa).

Positions 1–23 (MPRRQPPRPLLLLSALLCAPASA) are cleaved as a signal peptide. At 24 to 991 (FNLDEEKLTV…WSTPNVSFVI (968 aa)) the chain is on the extracellular side. FG-GAP repeat units follow at residues 28–90 (EEKL…RCRQ), 104–165 (NGTR…AYAE), 170–222 (RNSN…ITNY), 236–288 (QTGV…SSDL), 289–354 (TFIQ…FLFR), 355–413 (DPQI…GLKT), and 417–480 (QVLN…LNPM). An N-linked (GlcNAc...) asparagine glycan is attached at N66. Residues C81 and C88 are joined by a disulfide bond. N-linked (GlcNAc...) asparagine glycosylation occurs at N104. Residues C132 and C153 are joined by a disulfide bond. N159 is a glycosylation site (N-linked (GlcNAc...) asparagine). A disulfide bond links C169 and C182. N-linked (GlcNAc...) asparagine glycosylation is present at N221. Positions 257, 259, 261, and 265 each coordinate Ca(2+). N-linked (GlcNAc...) asparagine glycosylation is found at N284 and N293. 10 residues coordinate Ca(2+): D311, N313, D315, L317, D319, D377, N379, D381, Y383, and D385. The Cell attachment site signature appears at 437–439 (RGD). D441, D443, N445, Y447, and D449 together coordinate Ca(2+). The N-linked (GlcNAc...) asparagine glycan is linked to N486. Cystine bridges form between C489–C500 and C506–C562. N-linked (GlcNAc...) asparagine glycosylation occurs at N587. 2 disulfide bridges follow: C623-C629 and C695-C708. N-linked (GlcNAc...) asparagine glycosylation is found at N701, N719, N751, N762, N818, N877, and N904. 2 cysteine pairs are disulfide-bonded: C849–C905 and C910–C915. N952 and N986 each carry an N-linked (GlcNAc...) asparagine glycan. A helical membrane pass occupies residues 992-1015 (PLWVIILAIMLGLLVLAVLTLALW). The Cytoplasmic segment spans residues 1016–1044 (KCGFFDRARPPQDDMADREQLTNNKTTDA).

The protein belongs to the integrin alpha chain family. In terms of assembly, heterodimer of an alpha and a beta subunit. The alpha subunit is composed of a heavy and a light chain linked by a disulfide bond. Alpha-8 associates with beta-1. As to expression, prominently expressed on axons and on cells in contact with basal laminae in embryos.

It localises to the membrane. The protein resides in the cell membrane. In terms of biological role, integrin alpha-8/beta-1 functions in the genesis of kidney and probably of other organs by regulating the recruitment of mesenchymal cells into epithelial structures. It recognizes the sequence R-G-D in a wide array of ligands including TNC, FN1, SPP1, TGFB1, TGFB3 and VTN. NPNT is probably its functional ligand in kidney genesis. Neuronal receptor for TNC it mediates cell-cell interactions and regulates neurite outgrowth of sensory and motor neurons. This Gallus gallus (Chicken) protein is Integrin alpha-8 (ITGA8).